The following is a 285-amino-acid chain: Putative quercetin 2,3-dioxygenase PA3240 (285 aa).

The a divalent metal cation site is built by histidine 60, histidine 62, histidine 104, and glutamate 106.

The protein belongs to the pirin family. A divalent metal cation is required as a cofactor.

The catalysed reaction is quercetin + O2 = 2-(3,4-dihydroxybenzoyloxy)-4,6-dihydroxybenzoate + CO. It functions in the pathway flavonoid metabolism; quercetin degradation. Putative quercetin 2,3-dioxygenase. This is Putative quercetin 2,3-dioxygenase PA3240 from Pseudomonas aeruginosa (strain ATCC 15692 / DSM 22644 / CIP 104116 / JCM 14847 / LMG 12228 / 1C / PRS 101 / PAO1).